The chain runs to 1034 residues: Glycine dehydrogenase (decarboxylating), mitochondrial (1034 aa).

A mitochondrion-targeting transit peptide spans 1-63 (MERARRLAML…LNGFGSQVRT (63 aa)). An N6-(pyridoxal phosphate)lysine modification is found at Lys770.

This sequence belongs to the GcvP family. Homodimer. The glycine cleavage system is composed of four proteins: P, T, L and H. Requires pyridoxal 5'-phosphate as cofactor.

It is found in the mitochondrion. The catalysed reaction is N(6)-[(R)-lipoyl]-L-lysyl-[glycine-cleavage complex H protein] + glycine + H(+) = N(6)-[(R)-S(8)-aminomethyldihydrolipoyl]-L-lysyl-[glycine-cleavage complex H protein] + CO2. The glycine cleavage system catalyzes the degradation of glycine. The P protein binds the alpha-amino group of glycine through its pyridoxal phosphate cofactor; CO(2) is released and the remaining methylamine moiety is then transferred to the lipoamide cofactor of the H protein. This Flaveria anomala (Yellowtops) protein is Glycine dehydrogenase (decarboxylating), mitochondrial (GDCSP).